A 329-amino-acid chain; its full sequence is rRNA 2'-O-methyltransferase fibrillarin (329 aa).

The tract at residues 1-85 (MAFGAPRGRG…GGARGGARGG (85 aa)) is disordered. Positions 13-84 (RGGFGGRGGS…RGGARGGARG (72 aa)) are enriched in gly residues. S-adenosyl-L-methionine is bound by residues 181–182 (TS), 200–201 (EF), 225–226 (DA), and 245–248 (DVAQ).

This sequence belongs to the methyltransferase superfamily. Fibrillarin family. In terms of assembly, component of box C/D small nucleolar ribonucleoprotein (snoRNP) particles that contain SNU13, NOP1, SIK1/NOP56 and NOP58, plus a guide RNA. Post-translationally, by homology to other fibrillarins, some or all of the N-terminal domain arginines are modified to asymmetric dimethylarginine (DMA).

Its subcellular location is the nucleus. The protein resides in the nucleolus. It catalyses the reaction L-glutaminyl-[histone H2A] + S-adenosyl-L-methionine = N(5)-methyl-L-glutaminyl-[histone H2A] + S-adenosyl-L-homocysteine + H(+). In terms of biological role, S-adenosyl-L-methionine-dependent methyltransferase that has the ability to methylate both RNAs and proteins. Involved in pre-rRNA processing. Utilizes the methyl donor S-adenosyl-L-methionine to catalyze the site-specific 2'-hydroxyl methylation of ribose moieties in pre-ribosomal RNA. Site specificity is provided by a guide RNA that base pairs with the substrate. Methylation occurs at a characteristic distance from the sequence involved in base pairing with the guide RNA. Also acts as a protein methyltransferase by mediating methylation of 'Gln-105' of histone H2A (H2AQ105me), a modification that impairs binding of the FACT complex and is specifically present at 35S ribosomal DNA locus. The polypeptide is rRNA 2'-O-methyltransferase fibrillarin (NOP1) (Debaryomyces hansenii (strain ATCC 36239 / CBS 767 / BCRC 21394 / JCM 1990 / NBRC 0083 / IGC 2968) (Yeast)).